Here is a 212-residue protein sequence, read N- to C-terminus: Ribonuclease HII (212 aa).

The region spanning 20 to 209 is the RNase H type-2 domain; that stretch reads TCIVGVDEVG…VHNILYQEAS (190 aa). Positions 26, 27, and 117 each coordinate a divalent metal cation.

It belongs to the RNase HII family. Requires Mn(2+) as cofactor. It depends on Mg(2+) as a cofactor.

It is found in the cytoplasm. It catalyses the reaction Endonucleolytic cleavage to 5'-phosphomonoester.. Endonuclease that specifically degrades the RNA of RNA-DNA hybrids. The sequence is that of Ribonuclease HII from Cereibacter sphaeroides (strain ATCC 17025 / ATH 2.4.3) (Rhodobacter sphaeroides).